Consider the following 612-residue polypeptide: Citryl-spermidine/3,4-dihydroxybenzoyl-citryl-spermidine:spermidine ligase (612 aa).

Residues 282 to 284 (SMR), Lys-298, Arg-310, Tyr-390, and Glu-461 contribute to the ATP site.

This sequence belongs to the IucA/IucC family. Homodimer.

The enzyme catalyses N(8)-citryl-spermidine + spermidine + ATP = N(8),N'(8)-citryl-bis(spermidine) + AMP + diphosphate + H(+). The catalysed reaction is N(1)-(3,4-dihydroxybenzoyl)-N(8)-citryl-spermidine + spermidine + ATP = N(1)-(3,4-dihydroxybenzoyl)-N(8),N'(8)-citryl-bis(spermidine) + AMP + diphosphate + H(+). The protein operates within siderophore biosynthesis; petrobactin biosynthesis. Involved in the biosynthesis of petrobactin, a catecholate siderophore that functions in both iron acquisition and virulence. Catalyzes the ATP-dependent condensation of spermidine with N(8)-citryl-spermidine or N(1)-(3,4-dihydroxbenzoyl)-N(8)-citryl-spermidine, two intermediates in petrobactin biosynthesis pathway. In Bacillus anthracis, this protein is Citryl-spermidine/3,4-dihydroxybenzoyl-citryl-spermidine:spermidine ligase.